The chain runs to 474 residues: Glutamyl-tRNA(Gln) amidotransferase subunit A (474 aa).

Catalysis depends on charge relay system residues Lys-76 and Ser-151. Catalysis depends on Ser-175, which acts as the Acyl-ester intermediate.

The protein belongs to the amidase family. GatA subfamily. As to quaternary structure, heterotrimer of A, B and C subunits.

The catalysed reaction is L-glutamyl-tRNA(Gln) + L-glutamine + ATP + H2O = L-glutaminyl-tRNA(Gln) + L-glutamate + ADP + phosphate + H(+). Its function is as follows. Allows the formation of correctly charged Gln-tRNA(Gln) through the transamidation of misacylated Glu-tRNA(Gln) in organisms which lack glutaminyl-tRNA synthetase. The reaction takes place in the presence of glutamine and ATP through an activated gamma-phospho-Glu-tRNA(Gln). This Chlorobium chlorochromatii (strain CaD3) protein is Glutamyl-tRNA(Gln) amidotransferase subunit A.